The chain runs to 201 residues: Dephospho-CoA kinase (201 aa).

Positions V6 to G201 constitute a DPCK domain. Residue G14–A19 coordinates ATP.

The protein belongs to the CoaE family.

Its subcellular location is the cytoplasm. The enzyme catalyses 3'-dephospho-CoA + ATP = ADP + CoA + H(+). The protein operates within cofactor biosynthesis; coenzyme A biosynthesis; CoA from (R)-pantothenate: step 5/5. Functionally, catalyzes the phosphorylation of the 3'-hydroxyl group of dephosphocoenzyme A to form coenzyme A. The chain is Dephospho-CoA kinase from Novosphingobium aromaticivorans (strain ATCC 700278 / DSM 12444 / CCUG 56034 / CIP 105152 / NBRC 16084 / F199).